We begin with the raw amino-acid sequence, 356 residues long: Biotin synthase (356 aa).

The disordered stretch occupies residues 1–28; sequence MTIQANVPTGDETSDEASRQTSNEASSE. The region spanning 77 to 302 is the Radical SAM core domain; sequence EDVEVEGIIS…RTVLRYAGGR (226 aa). Positions 92, 96, and 99 each coordinate [4Fe-4S] cluster. 4 residues coordinate [2Fe-2S] cluster: Cys135, Cys168, Cys227, and Arg297.

This sequence belongs to the radical SAM superfamily. Biotin synthase family. Homodimer. [4Fe-4S] cluster serves as cofactor. It depends on [2Fe-2S] cluster as a cofactor.

The enzyme catalyses (4R,5S)-dethiobiotin + (sulfur carrier)-SH + 2 reduced [2Fe-2S]-[ferredoxin] + 2 S-adenosyl-L-methionine = (sulfur carrier)-H + biotin + 2 5'-deoxyadenosine + 2 L-methionine + 2 oxidized [2Fe-2S]-[ferredoxin]. It functions in the pathway cofactor biosynthesis; biotin biosynthesis; biotin from 7,8-diaminononanoate: step 2/2. Catalyzes the conversion of dethiobiotin (DTB) to biotin by the insertion of a sulfur atom into dethiobiotin via a radical-based mechanism. In Arthrobacter sp. (strain FB24), this protein is Biotin synthase.